The sequence spans 428 residues: Ribosomal RNA small subunit methyltransferase B (428 aa).

Residues 253-259 (CAAPGGK), Asp276, Asp302, and Asp321 each bind S-adenosyl-L-methionine. The Nucleophile role is filled by Cys374.

It belongs to the class I-like SAM-binding methyltransferase superfamily. RsmB/NOP family.

Its subcellular location is the cytoplasm. The enzyme catalyses cytidine(967) in 16S rRNA + S-adenosyl-L-methionine = 5-methylcytidine(967) in 16S rRNA + S-adenosyl-L-homocysteine + H(+). Specifically methylates the cytosine at position 967 (m5C967) of 16S rRNA. The polypeptide is Ribosomal RNA small subunit methyltransferase B (Citrobacter koseri (strain ATCC BAA-895 / CDC 4225-83 / SGSC4696)).